The sequence spans 510 residues: Holliday junction branch migration ATPase PINA (510 aa).

In terms of assembly, homohexamer. Interacts with Holliday junction resolvase Hjc, interacts with helicase Hjm (Hel308).

The enzyme catalyses ATP + H2O = ADP + phosphate + H(+). Functionally, important for growth at low temperatures (less than 65 degrees Celsius in this organism). Promotes Holliday junction (HJ) branch migration and unwinds Y-shaped DNA (but not replication forks or dsDNA) in an ATP hydrolysis-dependent manner. Stimulates cleavage by HJ resolvase Hjc. Hjc, Hjm (Hel308) and PINA coordinate HJ migration and cleavage of replication forks in a coordinated way. Probably acts as an ATP-dependent pump that pulls DNA through the hexamer. In Sulfolobus acidocaldarius (strain ATCC 33909 / DSM 639 / JCM 8929 / NBRC 15157 / NCIMB 11770), this protein is Holliday junction branch migration ATPase PINA.